The following is a 251-amino-acid chain: Probable transcriptional regulatory protein BLD_0450 (251 aa).

It belongs to the TACO1 family.

The protein localises to the cytoplasm. In Bifidobacterium longum (strain DJO10A), this protein is Probable transcriptional regulatory protein BLD_0450.